A 637-amino-acid polypeptide reads, in one-letter code: Palmitoyltransferase Hip14 (637 aa).

Over 1–295 (MYQSACQAAT…SKLRHDKRLR (295 aa)) the chain is Cytoplasmic. ANK repeat units lie at residues 77–106 (ETVTLLHWAAINNRRDIIRYFLEKGATVDA), 111–140 (LNATPLHWATRQGHLGAVVLLMAAGADPRI), 144–173 (EGCSCIHIAAQFAHTALVAYFIAKGVDPDL), 177–207 (GGMTALMWAAWKVCALDPVRLLLTLGANPAM), and 212–242 (HGNTALHWAILARNATAISTLVLKSKASLDV). A helical transmembrane segment spans residues 296–315 (WWSMVACPFTAFYLAGIVFT). The Lumenal portion of the chain corresponds to 316–318 (VNT). A helical membrane pass occupies residues 319-341 (LYIIKFFLLGCLYSIFHTIGKAL). The Cytoplasmic segment spans residues 342–345 (FDEH). The helical transmembrane segment at 346–366 (LMALLPLSVYLATKAWFYVTW) threads the bilayer. Residues 367–373 (LMYIDDA) are Lumenal-facing. A helical membrane pass occupies residues 374–394 (VSFTATVCFLISSLLLWVCFL). At 395 to 472 (KSWKGDPGII…VGNCIGLKNH (78 aa)) the chain is on the cytoplasmic side. The region spanning 430-480 (SFCSGCLVRRPIRSKHCSVCDRCVARFDHHCPWVGNCIGLKNHSYFMGFLW) is the DHHC domain. Catalysis depends on Cys460, which acts as the S-palmitoyl cysteine intermediate. The chain crosses the membrane as a helical span at residues 473–493 (SYFMGFLWMLLIMCAWMLYGG). At 494–520 (SKYYVNQCNVRFDDFLGAMRAIGNCDA) the chain is on the lumenal side. The helical transmembrane segment at 521 to 541 (WVGWVMGNALLHMSWVILLTI) threads the bilayer. Topologically, residues 542 to 637 (CQTYQVICLG…DGMAGDHQYV (96 aa)) are cytoplasmic.

Belongs to the DHHC palmitoyltransferase family. AKR/ZDHHC17 subfamily. In terms of assembly, interacts with dorsal-ventral patterning protein Sog. In terms of tissue distribution, in stage 13-15 embryos, expressed in the central nervous system. At the third instar larval stage, expressed in the ventral nerve cord and is enriched in the neuropil.

The protein localises to the golgi apparatus membrane. It is found in the presynaptic cell membrane. It carries out the reaction L-cysteinyl-[protein] + hexadecanoyl-CoA = S-hexadecanoyl-L-cysteinyl-[protein] + CoA. Functionally, probable palmitoyltransferase which is required for photoreceptor synaptic transmission and for the correct expression and localization of palmitoylated protein Csp and synaptosomal-associated protein Snap25. Probably palmitoylates Csp. Probably also palmitoylates the dorsal-ventral patterning protein Sog and promotes its secretion and activity and the stabilization of the membrane-bound form. Required for synaptic vesicle exocytosis. In Drosophila melanogaster (Fruit fly), this protein is Palmitoyltransferase Hip14.